Consider the following 240-residue polypeptide: DNA repair protein RecO (240 aa).

It belongs to the RecO family.

Involved in DNA repair and RecF pathway recombination. The polypeptide is DNA repair protein RecO (Pseudoalteromonas atlantica (strain T6c / ATCC BAA-1087)).